The primary structure comprises 266 residues: Auxin-responsive protein IAA21 (266 aa).

The short motif at 24 to 28 (LRLGL) is the EAR-like (transcriptional repression) element. Residues 27–50 (GLPGTAEEAESEGGGGGGTDAAPL) form a disordered region. The PB1 domain maps to 146-248 (CLYVKVSMDG…SCRRLRIMKG (103 aa)).

The protein belongs to the Aux/IAA family. In terms of assembly, homodimers and heterodimers. Highly expressed in flowers. Expressed in roots and seedlings.

Its subcellular location is the nucleus. In terms of biological role, aux/IAA proteins are short-lived transcriptional factors that function as repressors of early auxin response genes at low auxin concentrations. The chain is Auxin-responsive protein IAA21 (IAA21) from Oryza sativa subsp. japonica (Rice).